Here is a 122-residue protein sequence, read N- to C-terminus: Large ribosomal subunit protein uL14 (122 aa).

It belongs to the universal ribosomal protein uL14 family. As to quaternary structure, part of the 50S ribosomal subunit. Forms a cluster with proteins L3 and L19. In the 70S ribosome, L14 and L19 interact and together make contacts with the 16S rRNA in bridges B5 and B8.

Functionally, binds to 23S rRNA. Forms part of two intersubunit bridges in the 70S ribosome. This is Large ribosomal subunit protein uL14 from Psychrobacter sp. (strain PRwf-1).